A 246-amino-acid polypeptide reads, in one-letter code: tRNA1(Val) (adenine(37)-N6)-methyltransferase (246 aa).

The protein belongs to the methyltransferase superfamily. tRNA (adenine-N(6)-)-methyltransferase family.

The protein resides in the cytoplasm. The catalysed reaction is adenosine(37) in tRNA1(Val) + S-adenosyl-L-methionine = N(6)-methyladenosine(37) in tRNA1(Val) + S-adenosyl-L-homocysteine + H(+). Its function is as follows. Specifically methylates the adenine in position 37 of tRNA(1)(Val) (anticodon cmo5UAC). The protein is tRNA1(Val) (adenine(37)-N6)-methyltransferase of Shewanella halifaxensis (strain HAW-EB4).